We begin with the raw amino-acid sequence, 151 residues long: uncharacterized protein (151 aa).

Polar residues predominate over residues 40 to 57 (QMNRRNSENNTFDASNVG). Residues 40–125 (QMNRRNSENN…KRQPHYAEPI (86 aa)) are disordered. Over residues 83 to 110 (QRQNGRQHQHAGQQQPQHQHTQSQTRQT) the composition is skewed to low complexity.

This is an uncharacterized protein from Bacillus subtilis (strain 168).